The following is a 328-amino-acid chain: Malate dehydrogenase 1 (328 aa).

An NAD(+)-binding site is contributed by 12-18 (GAAGQIA). Positions 93 and 99 each coordinate substrate. Residues Asn106, Gln113, and 130–132 (VGN) each bind NAD(+). Asn132 and Arg163 together coordinate substrate. The Proton acceptor role is filled by His188.

It belongs to the LDH/MDH superfamily. MDH type 2 family.

It carries out the reaction (S)-malate + NAD(+) = oxaloacetate + NADH + H(+). Its function is as follows. Catalyzes the reversible oxidation of malate to oxaloacetate. This Burkholderia vietnamiensis (strain G4 / LMG 22486) (Burkholderia cepacia (strain R1808)) protein is Malate dehydrogenase 1.